The chain runs to 354 residues: MTEATQAQPAVPRLTSLSHGGGCGCKIAPGVLSELLKRATPPALFPDLLVGTETSDDAAVYRLNDEQAIVATTDFFMPIVDDPFDFGRIAATNALSDVYAMGGKPILALALVGMPINVLPHETIAAVLRGGESVCADAGIPVAGGHSIDSVEPIYGLAAIGVVHPSRVKRNAAARAGDVLVLGKPLGVGVLSAALKKNQLDADGYAQMVATTTKLNRPGAELAALPGVHALTDVTGFGLLGHTLELARGAQLTARVHYASLPWLAGVETFVADGVFTGASGRNWAAYGTDIRLADGLPPVAQALLTDPQTSGGLLVACVPEAVDDVLACFRADGFDRAAVIGEMADGPARVDVA.

Residue cysteine 23 is part of the active site. ATP contacts are provided by residues lysine 26 and 54–56; that span reads TSD. Aspartate 57 is a binding site for Mg(2+). ATP contacts are provided by residues aspartate 74, aspartate 97, and 145–147; that span reads GHS. Residue aspartate 97 participates in Mg(2+) binding. Residue aspartate 233 coordinates Mg(2+).

Belongs to the selenophosphate synthase 1 family. Class I subfamily. In terms of assembly, homodimer. It depends on Mg(2+) as a cofactor.

The catalysed reaction is hydrogenselenide + ATP + H2O = selenophosphate + AMP + phosphate + 2 H(+). Synthesizes selenophosphate from selenide and ATP. The protein is Selenide, water dikinase of Burkholderia cenocepacia (strain ATCC BAA-245 / DSM 16553 / LMG 16656 / NCTC 13227 / J2315 / CF5610) (Burkholderia cepacia (strain J2315)).